A 296-amino-acid chain; its full sequence is Phosphatidylglycerol--prolipoprotein diacylglyceryl transferase (296 aa).

Transmembrane regions (helical) follow at residues 28–48, 72–92, 110–130, and 139–159; these read WYGLCFSLGILFASLLGIYLA, FALYSLLFIIPGSRIAYILFY, GGLASHGGMLGLILWALIFSW, and LTFLFLCDLCASVFGCAAFMI. Residue R160 coordinates a 1,2-diacyl-sn-glycero-3-phospho-(1'-sn-glycerol). Helical transmembrane passes span 197–217, 226–246, and 263–283; these read VQLYEGMSYLLLSIILFFLSY, GWVTSLGLVGISLIRFFAEFF, and GQILSFPLFVFGLCLGIACFL.

The protein belongs to the Lgt family.

The protein localises to the cell inner membrane. The catalysed reaction is L-cysteinyl-[prolipoprotein] + a 1,2-diacyl-sn-glycero-3-phospho-(1'-sn-glycerol) = an S-1,2-diacyl-sn-glyceryl-L-cysteinyl-[prolipoprotein] + sn-glycerol 1-phosphate + H(+). The protein operates within protein modification; lipoprotein biosynthesis (diacylglyceryl transfer). In terms of biological role, catalyzes the transfer of the diacylglyceryl group from phosphatidylglycerol to the sulfhydryl group of the N-terminal cysteine of a prolipoprotein, the first step in the formation of mature lipoproteins. The chain is Phosphatidylglycerol--prolipoprotein diacylglyceryl transferase from Chlamydia caviae (strain ATCC VR-813 / DSM 19441 / 03DC25 / GPIC) (Chlamydophila caviae).